The chain runs to 1032 residues: Vacuolar membrane protease (1032 aa).

The Cytoplasmic portion of the chain corresponds to 1-11 (MKLGNPFVFRP). The helical transmembrane segment at 12-32 (GPVSFWTTIVYLAIIIPLIYV) threads the bilayer. Residues 33–415 (QETVPPAPSE…SAFALRGLFA (383 aa)) lie on the Vacuolar side of the membrane. Residues Asn-50, Asn-138, and Asn-147 are each glycosylated (N-linked (GlcNAc...) asparagine). The Zn(2+) site is built by His-194 and Asp-206. The Proton acceptor role is filled by Glu-240. Glu-241, Glu-266, and His-339 together coordinate Zn(2+). A helical membrane pass occupies residues 416 to 436 (WTLTLLITTPLVLFVVTYLLV). At 437-469 (RDDKWYFFATKVDSTVGDGEETVSFGGWKGFVR) the chain is on the cytoplasmic side. A helical transmembrane segment spans residues 470-490 (FPFALVVATALTIGSVFLLAK). Topologically, residues 491 to 493 (VNP) are vacuolar. The chain crosses the membrane as a helical span at residues 494-514 (LIIYSSGYSVWAMMISLFYFV). The Cytoplasmic portion of the chain corresponds to 515–532 (SWLLLRGAHFVRPSALQR). A helical membrane pass occupies residues 533–553 (GFTLIWLFIITWVLSVFAAVA). The Vacuolar portion of the chain corresponds to 554–560 (EDRMNMG). Residues 561-581 (AVYPLAFLHTFAFAAVLISLL) traverse the membrane as a helical segment. The Cytoplasmic segment spans residues 582–701 (EQYALPAKQD…WSGRLPTWTW (120 aa)). Residues 595–688 (QVSGENEEEE…RKRSFPPYEN (94 aa)) are disordered. Residues 599–608 (ENEEEEEQEQ) show a composition bias toward acidic residues. Positions 651-660 (SSEQTTTFAN) are enriched in polar residues. The chain crosses the membrane as a helical span at residues 702-722 (FIQLLLLVPLYVTVLGNLALV). Residues 723–738 (QTTSIGKTGTDGSSLL) are Vacuolar-facing. A helical membrane pass occupies residues 739-759 (APLMGVGILAILLLLPLTPFI). Over 760-766 (HRVSHHV) the chain is Cytoplasmic. A helical membrane pass occupies residues 767-787 (PLFLFLVFIGTLIYNLTAFPF). The Vacuolar segment spans residues 788-1032 (SDNNRFKFYF…VEITKKIKVA (245 aa)). A glycan (N-linked (GlcNAc...) asparagine) is linked at Asn-940.

The protein belongs to the peptidase M28 family. Zn(2+) serves as cofactor.

The protein resides in the vacuole membrane. May be involved in vacuolar sorting and osmoregulation. In Metarhizium robertsii (strain ARSEF 23 / ATCC MYA-3075) (Metarhizium anisopliae (strain ARSEF 23)), this protein is Vacuolar membrane protease.